Reading from the N-terminus, the 136-residue chain is Probable disulfide formation protein (136 aa).

A helical membrane pass occupies residues 7–26 (NNALYFAWLICSTGTVMSIY). C36 and C39 are oxidised to a cystine. 2 helical membrane passes run 41-60 (YQRI…TYRE) and 67-84 (YALP…YQIC). C96 and C101 form a disulfide bridge. A helical membrane pass occupies residues 109–133 (GFITVPMASALAFCAISCLLILSGS).

This sequence belongs to the DsbB family. BdbC subfamily.

It is found in the cell inner membrane. In terms of biological role, required for disulfide bond formation in some proteins. The sequence is that of Probable disulfide formation protein from Chlamydia caviae (strain ATCC VR-813 / DSM 19441 / 03DC25 / GPIC) (Chlamydophila caviae).